Here is a 373-residue protein sequence, read N- to C-terminus: GTPase Obg (373 aa).

Positions 1–158 (MFVDSVELLI…KQVRLEMKLI (158 aa)) constitute an Obg domain. The disordered stretch occupies residues 62 to 83 (NHIKAENGRPGEGRKKYGRKGQ). The span at 64 to 76 (IKAENGRPGEGRK) shows a compositional bias: basic and acidic residues. Positions 159–362 (ADVGLVGYPN…LRYALGDFVK (204 aa)) constitute an OBG-type G domain. GTP contacts are provided by residues 165–172 (GYPNVGKS), 190–194 (FTTLT), 212–215 (DIPG), 280–283 (TKID), and 343–345 (SSV). S172 and T192 together coordinate Mg(2+).

Belongs to the TRAFAC class OBG-HflX-like GTPase superfamily. OBG GTPase family. In terms of assembly, monomer. Mg(2+) is required as a cofactor.

Its subcellular location is the cytoplasm. In terms of biological role, an essential GTPase which binds GTP, GDP and possibly (p)ppGpp with moderate affinity, with high nucleotide exchange rates and a fairly low GTP hydrolysis rate. Plays a role in control of the cell cycle, stress response, ribosome biogenesis and in those bacteria that undergo differentiation, in morphogenesis control. This is GTPase Obg from Sulfurovum sp. (strain NBC37-1).